A 606-amino-acid chain; its full sequence is V-type proton ATPase catalytic subunit A (606 aa).

239–246 (GAFGCGKT) provides a ligand contact to ATP.

It belongs to the ATPase alpha/beta chains family. In terms of assembly, V-ATPase is a heteromultimeric enzyme made up of two complexes: the ATP-hydrolytic V1 complex and the proton translocation V0 complex. The V1 complex consists of three catalytic AB heterodimers that form a heterohexamer, three peripheral stalks each consisting of EG heterodimers, one central rotor including subunits D and F, and the regulatory subunits C and H. The proton translocation complex V0 consists of the proton transport subunit a, a ring of proteolipid subunits c9c'', rotary subunit d, subunits e and f, and the accessory subunits vah-19/Ac45 and vah-20/PRR.

It carries out the reaction ATP + H2O + 4 H(+)(in) = ADP + phosphate + 5 H(+)(out). Its function is as follows. Catalytic subunit of the V1 complex of vacuolar(H+)-ATPase (V-ATPase), a multisubunit enzyme composed of a peripheral complex (V1) that hydrolyzes ATP and a membrane integral complex (V0) that translocates protons. V-ATPase is responsible for acidifying and maintaining the pH of intracellular compartments and in some cell types, is targeted to the plasma membrane, where it is responsible for acidifying the extracellular environment. Required along with other vacuolar ATPase components for the removal of protein aggregates which form in immature oocytes in the distal gonad. This removal occurs as the oocytes mature and move to the proximal gonad, is triggered by the introduction of sperm through mating and occurs before fertilization. The introduction of sperm triggers V-ATPase accumulation in proximal oocytes and induces lysosomal acidification which leads to engulfing of protein aggregates by lysosomes and subsequent clearance of the aggregates. Lysosomal acidification also leads to changes in mitochondrial morphology and function. Mitochondria in distal immature oocytes are fragmented, produce high levels of reactive oxygen species (ROS) and have high membrane potential, indicative of metabolic inactivity. In contrast, mitochondria in proximal mature oocytes are tubular with lower ROS levels and membrane potential, indicative of an active metabolic state required for aggregate mobilization before clearance. Involved in receptor-mediated endocytosis. The polypeptide is V-type proton ATPase catalytic subunit A (Caenorhabditis briggsae).